The chain runs to 753 residues: Polyribonucleotide nucleotidyltransferase (753 aa).

The Mg(2+) site is built by Asp488 and Asp494. In terms of domain architecture, KH spans 555 to 614 (PKLYTMKINPEKIRDVIGKGGSTIRALTEETGTQIDIGEDGTITIASSDAAKADEAKRRI). One can recognise an S1 motif domain in the interval 624 to 692 (GKIYEGPVTK…EKGRVKLSLK (69 aa)). A disordered region spans residues 692 to 753 (KALTERPAGM…EGEQQQQQQQ (62 aa)). Basic and acidic residues predominate over residues 699–739 (AGMERSDRPAPAEREFRQPREPRQQREFREPREPREPRDGG).

This sequence belongs to the polyribonucleotide nucleotidyltransferase family. Mg(2+) serves as cofactor.

The protein localises to the cytoplasm. The catalysed reaction is RNA(n+1) + phosphate = RNA(n) + a ribonucleoside 5'-diphosphate. In terms of biological role, involved in mRNA degradation. Catalyzes the phosphorolysis of single-stranded polyribonucleotides processively in the 3'- to 5'-direction. This is Polyribonucleotide nucleotidyltransferase from Delftia acidovorans (strain DSM 14801 / SPH-1).